A 112-amino-acid polypeptide reads, in one-letter code: UPF0342 protein STH1710 (112 aa).

Belongs to the UPF0342 family.

This Symbiobacterium thermophilum (strain DSM 24528 / JCM 14929 / IAM 14863 / T) protein is UPF0342 protein STH1710.